We begin with the raw amino-acid sequence, 442 residues long: Cyclic 2,3-diphosphoglycerate synthetase (442 aa).

This sequence belongs to the cyclic 2,3-diphosphoglycerate synthetase family.

Its subcellular location is the cytoplasm. The enzyme catalyses (2R)-2,3-bisphosphoglycerate + ATP + H(+) = cyclic (2R)-2,3-bisphosphoglycerate + ADP + phosphate. In terms of biological role, catalyzes the formation of cyclic 2,3-diphosphoglycerate (cDPG) by formation of an intramolecular phosphoanhydride bond at the expense of ATP. The polypeptide is Cyclic 2,3-diphosphoglycerate synthetase (Rubrobacter xylanophilus (strain DSM 9941 / JCM 11954 / NBRC 16129 / PRD-1)).